A 110-amino-acid chain; its full sequence is MFEKTNRMNLLFDFYQELLTTKQKAYVSFYYLDDYSLGEIAEEFEVSRQAIYDNIKRTEESLEKYEEKLGMLKKYQQREKLFSQLEAQLTKKNFLDEQVKDTLEQLKNID.

Belongs to the UPF0122 family.

Might take part in the signal recognition particle (SRP) pathway. This is inferred from the conservation of its genetic proximity to ftsY/ffh. May be a regulatory protein. The chain is UPF0122 protein LMOf2365_1829 from Listeria monocytogenes serotype 4b (strain F2365).